We begin with the raw amino-acid sequence, 282 residues long: MAITAAQVKELRDRTGAGMMDCKKALTETDGDIELAIDSMRKSGAAKAAKKAGNIAAEGTILIKNGEGYAALLEVNCQTDFVAKDANFLAFANAVLEVAAASKVTIEDLKAQFEETRIALVTKIGENINVRRVEYIDGANLASYRHGERIGVVVAGEADEETLKHVAMHVAASKPEFVNPEDVPADLVERERALQIEIAMNEGKPAEIAEKMVFGRMKKFTGEISLTGQAYIMEPKKTVGAILKEKGATVSNFVRLEVGEGIAKKEEDFAAEVAAQIAATKA.

The interval 79 to 82 (TDFV) is involved in Mg(2+) ion dislocation from EF-Tu.

This sequence belongs to the EF-Ts family.

Its subcellular location is the cytoplasm. Its function is as follows. Associates with the EF-Tu.GDP complex and induces the exchange of GDP to GTP. It remains bound to the aminoacyl-tRNA.EF-Tu.GTP complex up to the GTP hydrolysis stage on the ribosome. This is Elongation factor Ts from Shewanella sediminis (strain HAW-EB3).